The chain runs to 427 residues: Cryptic catabolic NAD-specific glutamate dehydrogenase GudB (427 aa).

Residues K80 and K107 each coordinate substrate. Residue K119 is the Proton donor of the active site. Residues T203 and N234 each contribute to the NAD(+) site. Residue S361 participates in substrate binding.

This sequence belongs to the Glu/Leu/Phe/Val dehydrogenases family. In terms of assembly, homohexamer.

The catalysed reaction is L-glutamate + NAD(+) + H2O = 2-oxoglutarate + NH4(+) + NADH + H(+). In terms of biological role, gudB seems to be intrinsically inactive, however spontaneous mutations removing a 9-bp direct repeat within the wild-type gudB sequence activated the GudB protein and allowed more-efficient utilization of amino acids of the glutamate family (called gutB1). This 3 amino acid insertion presumably causes severe destabilization of the fold of the protein, leading to an inactive enzyme that is very quickly degraded. The cryptic GudB serves as a buffer that may compensate for mutations in the rocG gene and that can also be decryptified for the utilization of glutamate as a single carbon source in the absence of arginine. It is unable to synthesize glutamate. This Bacillus subtilis (strain 168) protein is Cryptic catabolic NAD-specific glutamate dehydrogenase GudB.